The chain runs to 68 residues: Large ribosomal subunit protein bL31 (68 aa).

Positions 16, 18, 37, and 40 each coordinate Zn(2+).

It belongs to the bacterial ribosomal protein bL31 family. Type A subfamily. In terms of assembly, part of the 50S ribosomal subunit. Requires Zn(2+) as cofactor.

In terms of biological role, binds the 23S rRNA. The polypeptide is Large ribosomal subunit protein bL31 (Aquifex aeolicus (strain VF5)).